We begin with the raw amino-acid sequence, 603 residues long: Matrix metalloproteinase-17 (603 aa).

An N-terminal signal peptide occupies residues 1 to 35 (MRRRAARGPGPPPPGPGLSRLPLPLLLLLALGTRG). Residues 36–125 (GCAAPAPAPR…PVLTQARRRR (90 aa)) constitute a propeptide that is removed on maturation. The Cysteine switch motif lies at 108–115 (PRCSLPDL). Cys-110 provides a ligand contact to Zn(2+). The N-linked (GlcNAc...) asparagine glycan is linked to Asn-137. Residue His-248 participates in Zn(2+) binding. Residue Glu-249 is part of the active site. Zn(2+) is bound by residues His-252 and His-258. The tract at residues 301–329 (SPTAQPEEPPLLPEPPDNRSSAPPRKDVP) is disordered. Asn-318 carries N-linked (GlcNAc...) asparagine glycosylation. Residues Cys-332 and Cys-523 are joined by a disulfide bond. Hemopexin repeat units lie at residues 333-378 (STHF…WRGL), 382-427 (LDSV…FSLP), 428-475 (PGGI…WRGV), and 476-523 (PSTL…WLVC). The interval 537-571 (DAAEGPRAPPGQHDQSRSEDGYEVCSCTSGASSPP) is disordered. Ser-565 carries the GPI-anchor amidated serine lipid modification. Positions 566 to 603 (GASSPPGAPGPLVAATMLLLLPPLSPGALWTAAQALTL) are cleaved as a propeptide — removed in mature form.

Belongs to the peptidase M10A family. The cofactor is Zn(2+). It depends on Ca(2+) as a cofactor. In terms of processing, the precursor is cleaved by a furin endopeptidase. Expressed in brain, leukocytes, colon, ovary testis and breast cancer. Expressed also in many transformed and non-transformed cell types.

The protein resides in the cell membrane. It localises to the secreted. The protein localises to the extracellular space. Its subcellular location is the extracellular matrix. Functionally, endopeptidase that degrades various components of the extracellular matrix, such as fibrin. May be involved in the activation of membrane-bound precursors of growth factors or inflammatory mediators, such as tumor necrosis factor-alpha. May also be involved in tumoral process. Cleaves pro-TNF-alpha at the '74-Ala-|-Gln-75' site. Not obvious if able to proteolytically activate progelatinase A. Does not hydrolyze collagen types I, II, III, IV and V, gelatin, fibronectin, laminin, decorin nor alpha1-antitrypsin. The sequence is that of Matrix metalloproteinase-17 (MMP17) from Homo sapiens (Human).